The sequence spans 103 residues: Large ribosomal subunit protein bL21 (103 aa).

It belongs to the bacterial ribosomal protein bL21 family. As to quaternary structure, part of the 50S ribosomal subunit. Contacts protein L20.

In terms of biological role, this protein binds to 23S rRNA in the presence of protein L20. The chain is Large ribosomal subunit protein bL21 from Aliivibrio fischeri (strain ATCC 700601 / ES114) (Vibrio fischeri).